Here is a 344-residue protein sequence, read N- to C-terminus: MLLGRSAAELESWAVAQGQKPFRGRQLHDWLYAKGARSLSEITVLPKAWRESLKEDGVEVGRLKEVHRSVAADATTKLLLSTDDGETIETVGIPTDQRLTVCVSSQVGCPMACRFCATGKGGLQRSLRTHEIVDQVLSVREVMDRRPSHIVFMGMGEPLLNSQAVLDAIRCLNDDLGIGQRRITVSTVGVPKTLPQLAELALATLGRAQFTLAVSLHAPNQALREELIPTAHAYPYEALLEDCRHYLAVTGRRVSFEYILLGGLNDAPEHAAELADRVGGFQSHVNLIAYNPIEEEEFQRPTRARIEGFQRVLERRGVAVSLRASRGLDQNAACGQLRRRRQGS.

The Proton acceptor role is filled by Glu89. The Radical SAM core domain occupies 95 to 329 (TDQRLTVCVS…VSLRASRGLD (235 aa)). Cys102 and Cys334 are disulfide-bonded. [4Fe-4S] cluster-binding residues include Cys109, Cys113, and Cys116. Residues 156–157 (GE), Ser186, 215–217 (SLH), and Asn291 each bind S-adenosyl-L-methionine. Residue Cys334 is the S-methylcysteine intermediate of the active site.

The protein belongs to the radical SAM superfamily. RlmN family. It depends on [4Fe-4S] cluster as a cofactor.

It localises to the cytoplasm. The enzyme catalyses adenosine(2503) in 23S rRNA + 2 reduced [2Fe-2S]-[ferredoxin] + 2 S-adenosyl-L-methionine = 2-methyladenosine(2503) in 23S rRNA + 5'-deoxyadenosine + L-methionine + 2 oxidized [2Fe-2S]-[ferredoxin] + S-adenosyl-L-homocysteine. The catalysed reaction is adenosine(37) in tRNA + 2 reduced [2Fe-2S]-[ferredoxin] + 2 S-adenosyl-L-methionine = 2-methyladenosine(37) in tRNA + 5'-deoxyadenosine + L-methionine + 2 oxidized [2Fe-2S]-[ferredoxin] + S-adenosyl-L-homocysteine. Functionally, specifically methylates position 2 of adenine 2503 in 23S rRNA and position 2 of adenine 37 in tRNAs. This Parasynechococcus marenigrum (strain WH8102) protein is Probable dual-specificity RNA methyltransferase RlmN.